The sequence spans 409 residues: Calsequestrin-2 (409 aa).

The signal sequence occupies residues 1 to 19 (MKRAHLFVVGVYLLSSCRA). Position 282 is a phosphotyrosine (tyrosine 282). Asparagine 335 carries an N-linked (GlcNAc...) asparagine glycan. Positions 364–409 (DVLSGKINTEDDDNEDEDDDDDNDDDDDDNGNSDEEDNDDSDEDDE) are disordered. Acidic residues predominate over residues 373–409 (EDDDNEDEDDDDDNDDDDDDNGNSDEEDNDDSDEDDE).

It belongs to the calsequestrin family. As to quaternary structure, monomer, homodimer and homooligomer. Mostly monomeric in the absence of calcium. Forms higher oligomers in a calcium-dependent manner. Dimers associate to form tetramers, that then form linear homomer chains. Interacts with ASPH and TRDN. Post-translationally, phosphorylation in the C-terminus, probably by CK2, moderately increases calcium buffering capacity. N-glycosylated. As to expression, detected in heart muscle (at protein level).

It is found in the sarcoplasmic reticulum lumen. Calsequestrin is a high-capacity, moderate affinity, calcium-binding protein and thus acts as an internal calcium store in muscle. Calcium ions are bound by clusters of acidic residues at the protein surface, especially at the interface between subunits. Can bind around 60 Ca(2+) ions. Regulates the release of lumenal Ca(2+) via the calcium release channel RYR2; this plays an important role in triggering muscle contraction. Plays a role in excitation-contraction coupling in the heart and in regulating the rate of heart beats. The sequence is that of Calsequestrin-2 (CASQ2) from Oryctolagus cuniculus (Rabbit).